The sequence spans 284 residues: D-tagatose-1,6-bisphosphate aldolase subunit GatY (284 aa).

Aspartate 82 functions as the Proton donor in the catalytic mechanism. Positions 83 and 180 each coordinate Zn(2+). Glycine 181 is a binding site for dihydroxyacetone phosphate. Histidine 208 is a Zn(2+) binding site. Dihydroxyacetone phosphate contacts are provided by residues 209–211 and 230–233; these read GAS and NVAT.

This sequence belongs to the class II fructose-bisphosphate aldolase family. TagBP aldolase GatY subfamily. Forms a complex with GatZ. Zn(2+) is required as a cofactor.

It carries out the reaction D-tagatofuranose 1,6-bisphosphate = D-glyceraldehyde 3-phosphate + dihydroxyacetone phosphate. The protein operates within carbohydrate metabolism; D-tagatose 6-phosphate degradation; D-glyceraldehyde 3-phosphate and glycerone phosphate from D-tagatose 6-phosphate: step 2/2. Functionally, catalytic subunit of the tagatose-1,6-bisphosphate aldolase GatYZ, which catalyzes the reversible aldol condensation of dihydroxyacetone phosphate (DHAP or glycerone-phosphate) with glyceraldehyde 3-phosphate (G3P) to produce tagatose 1,6-bisphosphate (TBP). Requires GatZ subunit for full activity and stability. Is involved in the catabolism of galactitol and D-tagatose. This is D-tagatose-1,6-bisphosphate aldolase subunit GatY (gatY) from Klebsiella oxytoca.